Reading from the N-terminus, the 142-residue chain is Nucleoside diphosphate kinase (142 aa).

Residues Lys-11, Phe-59, Arg-87, Thr-93, Arg-104, and Asn-114 each contribute to the ATP site. His-117 (pros-phosphohistidine intermediate) is an active-site residue.

This sequence belongs to the NDK family. As to quaternary structure, homotetramer. Requires Mg(2+) as cofactor.

The protein localises to the cytoplasm. The catalysed reaction is a 2'-deoxyribonucleoside 5'-diphosphate + ATP = a 2'-deoxyribonucleoside 5'-triphosphate + ADP. It catalyses the reaction a ribonucleoside 5'-diphosphate + ATP = a ribonucleoside 5'-triphosphate + ADP. Its function is as follows. Major role in the synthesis of nucleoside triphosphates other than ATP. The ATP gamma phosphate is transferred to the NDP beta phosphate via a ping-pong mechanism, using a phosphorylated active-site intermediate. The sequence is that of Nucleoside diphosphate kinase from Pectobacterium carotovorum subsp. carotovorum (strain PC1).